Consider the following 398-residue polypeptide: 1-deoxy-D-xylulose 5-phosphate reductoisomerase (398 aa).

8 residues coordinate NADPH: threonine 10, glycine 11, serine 12, isoleucine 13, glycine 36, lysine 37, asparagine 38, and asparagine 124. A 1-deoxy-D-xylulose 5-phosphate-binding site is contributed by lysine 125. Glutamate 126 is an NADPH binding site. Aspartate 150 contacts Mn(2+). The 1-deoxy-D-xylulose 5-phosphate site is built by serine 151, glutamate 152, serine 186, and histidine 209. Glutamate 152 is a binding site for Mn(2+). Residue glycine 215 participates in NADPH binding. Residues serine 222, asparagine 227, lysine 228, and glutamate 231 each coordinate 1-deoxy-D-xylulose 5-phosphate. Mn(2+) is bound at residue glutamate 231.

It belongs to the DXR family. As to quaternary structure, homodimer. It depends on Mg(2+) as a cofactor. Mn(2+) is required as a cofactor.

It carries out the reaction 2-C-methyl-D-erythritol 4-phosphate + NADP(+) = 1-deoxy-D-xylulose 5-phosphate + NADPH + H(+). The protein operates within isoprenoid biosynthesis; isopentenyl diphosphate biosynthesis via DXP pathway; isopentenyl diphosphate from 1-deoxy-D-xylulose 5-phosphate: step 1/6. Functionally, catalyzes the NADPH-dependent rearrangement and reduction of 1-deoxy-D-xylulose-5-phosphate (DXP) to 2-C-methyl-D-erythritol 4-phosphate (MEP). In Escherichia coli O157:H7, this protein is 1-deoxy-D-xylulose 5-phosphate reductoisomerase.